Reading from the N-terminus, the 1009-residue chain is Chitin synthase 2 (1009 aa).

2 stretches are compositionally biased toward polar residues: residues 1–12 (MSYNNPNNSNSH) and 34–62 (EFLNQRSNTPLTQGTYNYHNTSTNSLNFQ). Disordered regions lie at residues 1–62 (MSYN…LNFQ) and 175–234 (DESQ…EVRS). Positions 192-202 (EGEEEEEEGET) are enriched in acidic residues. Transmembrane regions (helical) follow at residues 647 to 667 (WLNGSFFAAIYSLVHFYKVWT), 682 to 702 (FFYQLINLIVSWFSIGSYFLV), 722 to 742 (ILSVIFLWLYLASIVTTFVLS), 757 to 777 (IVIFFAILMAYMIFAAIFMAV), 804 to 823 (LVVATSSTYALYFLASFLYF), 930 to 950 (VLVWMFTNFVVIALVLETGGF), and 967 to 987 (AAVFLTVILWTVAFMALFRFI).

It belongs to the chitin synthase family.

It localises to the cell membrane. It catalyses the reaction [(1-&gt;4)-N-acetyl-beta-D-glucosaminyl](n) + UDP-N-acetyl-alpha-D-glucosamine = [(1-&gt;4)-N-acetyl-beta-D-glucosaminyl](n+1) + UDP + H(+). Polymerizes chitin, a structural polymer of the cell wall and septum, by transferring the sugar moiety of UDP-GlcNAc to the non-reducing end of the growing chitin polymer. In Candida albicans (Yeast), this protein is Chitin synthase 2 (CHS2).